A 472-amino-acid polypeptide reads, in one-letter code: Adenosylhomocysteinase (472 aa).

The substrate site is built by threonine 61, aspartate 136, and glutamate 196. 197–199 contributes to the NAD(+) binding site; the sequence is TTT. 2 residues coordinate substrate: lysine 226 and aspartate 230. Residues asparagine 231, 260-265, glutamate 283, asparagine 318, 339-341, and asparagine 384 contribute to the NAD(+) site; these read GYGDVG and IGH.

The protein belongs to the adenosylhomocysteinase family. It depends on NAD(+) as a cofactor.

The protein localises to the cytoplasm. The enzyme catalyses S-adenosyl-L-homocysteine + H2O = L-homocysteine + adenosine. Its pathway is amino-acid biosynthesis; L-homocysteine biosynthesis; L-homocysteine from S-adenosyl-L-homocysteine: step 1/1. Its function is as follows. May play a key role in the regulation of the intracellular concentration of adenosylhomocysteine. This is Adenosylhomocysteinase from Cupriavidus metallidurans (strain ATCC 43123 / DSM 2839 / NBRC 102507 / CH34) (Ralstonia metallidurans).